The primary structure comprises 505 residues: Protein disulfide-isomerase A3 (505 aa).

The N-terminal stretch at 1 to 24 is a signal peptide; that stretch reads MSVPRPSRAALLLLVPLLALSAGA. 2 consecutive Thioredoxin domains span residues 25–131 and 341–483; these read SDVV…KQAG and SRDG…REAT. Active-site nucleophile residues include Cys55 and Cys58. 3 disulfide bridges follow: Cys55-Cys58, Cys83-Cys90, and Cys404-Cys407. Active-site nucleophile residues include Cys404 and Cys407. Residues 486–505 are disordered; the sequence is PVLQEEDKAKKSKKKAKEDL. Positions 495-505 are enriched in basic residues; that stretch reads KKSKKKAKEDL. The Prevents secretion from ER motif lies at 502–505; sequence KEDL.

Belongs to the protein disulfide isomerase family.

It is found in the endoplasmic reticulum. The protein resides in the endoplasmic reticulum lumen. The protein localises to the melanosome. It carries out the reaction Catalyzes the rearrangement of -S-S- bonds in proteins.. In terms of biological role, protein disulfide isomerase that catalyzes the formation, isomerization, and reduction or oxidation of disulfide bonds in client proteins and functions as a protein folding chaperone. The polypeptide is Protein disulfide-isomerase A3 (PDIA3) (Gallus gallus (Chicken)).